Reading from the N-terminus, the 216-residue chain is Small ribosomal subunit protein uS5 (216 aa).

The S5 DRBM domain maps to 51–114; that stretch reads LEEEVIDVNL…DDAKFNIIKV (64 aa).

Belongs to the universal ribosomal protein uS5 family. Part of the 30S ribosomal subunit. Contacts protein S4.

With S4 and S12 plays an important role in translational accuracy. The chain is Small ribosomal subunit protein uS5 from Methanothermobacter thermautotrophicus (strain ATCC 29096 / DSM 1053 / JCM 10044 / NBRC 100330 / Delta H) (Methanobacterium thermoautotrophicum).